The following is a 426-amino-acid chain: Serine hydroxymethyltransferase (426 aa).

Residues Leu122 and 126 to 128 (GHL) contribute to the (6S)-5,6,7,8-tetrahydrofolate site. Lys231 carries the post-translational modification N6-(pyridoxal phosphate)lysine. Residues Glu247 and 355 to 357 (SPF) each bind (6S)-5,6,7,8-tetrahydrofolate.

Belongs to the SHMT family. In terms of assembly, homodimer. Pyridoxal 5'-phosphate serves as cofactor.

The protein resides in the cytoplasm. The catalysed reaction is (6R)-5,10-methylene-5,6,7,8-tetrahydrofolate + glycine + H2O = (6S)-5,6,7,8-tetrahydrofolate + L-serine. The protein operates within one-carbon metabolism; tetrahydrofolate interconversion. Its pathway is amino-acid biosynthesis; glycine biosynthesis; glycine from L-serine: step 1/1. Its function is as follows. Catalyzes the reversible interconversion of serine and glycine with tetrahydrofolate (THF) serving as the one-carbon carrier. This reaction serves as the major source of one-carbon groups required for the biosynthesis of purines, thymidylate, methionine, and other important biomolecules. Also exhibits THF-independent aldolase activity toward beta-hydroxyamino acids, producing glycine and aldehydes, via a retro-aldol mechanism. The protein is Serine hydroxymethyltransferase of Cyanothece sp. (strain PCC 7425 / ATCC 29141).